A 133-amino-acid chain; its full sequence is MYRSSISIQVFICVLFLPLDSGRPLIYMIDLSYICSDATVFSGKSRVIFFSNPICEHTRGNFYLFYLNYIINTFAPKNRGTRRCKPFGLHINCRKKIDCLHVQLSYILCKNKSRKRHMDAHAITLAWLAHALT.

The signal sequence occupies residues 1-22 (MYRSSISIQVFICVLFLPLDSG). Asn111 carries an N-linked (GlcNAc...) asparagine glycan.

It is found in the secreted. This is an uncharacterized protein from Saccharomyces cerevisiae (strain ATCC 204508 / S288c) (Baker's yeast).